A 454-amino-acid polypeptide reads, in one-letter code: Bifunctional protein GlmU (454 aa).

The interval 1 to 230 (MSGRFAVILA…LSETMGVNDR (230 aa)) is pyrophosphorylase. Residues 9 to 12 (LAAG), Lys-23, Gln-73, and 78 to 79 (GT) each bind UDP-N-acetyl-alpha-D-glucosamine. Residue Asp-103 coordinates Mg(2+). UDP-N-acetyl-alpha-D-glucosamine is bound by residues Gly-140, Glu-155, Asn-170, and Asn-228. Mg(2+) is bound at residue Asn-228. The interval 231-251 (VALSQAEAAMRKRINEEWMRQ) is linker. Residues 252-454 (GVTIIDPQTT…NKDNYVKKDV (203 aa)) form an N-acetyltransferase region. Residues Arg-333 and Lys-351 each contribute to the UDP-N-acetyl-alpha-D-glucosamine site. The Proton acceptor role is filled by His-363. UDP-N-acetyl-alpha-D-glucosamine is bound by residues Tyr-366 and Asn-377. Residues 386-387 (NY), Ser-405, Ala-423, and Arg-440 contribute to the acetyl-CoA site.

This sequence in the N-terminal section; belongs to the N-acetylglucosamine-1-phosphate uridyltransferase family. The protein in the C-terminal section; belongs to the transferase hexapeptide repeat family. As to quaternary structure, homotrimer. Mg(2+) serves as cofactor.

The protein resides in the cytoplasm. The catalysed reaction is alpha-D-glucosamine 1-phosphate + acetyl-CoA = N-acetyl-alpha-D-glucosamine 1-phosphate + CoA + H(+). It carries out the reaction N-acetyl-alpha-D-glucosamine 1-phosphate + UTP + H(+) = UDP-N-acetyl-alpha-D-glucosamine + diphosphate. It participates in nucleotide-sugar biosynthesis; UDP-N-acetyl-alpha-D-glucosamine biosynthesis; N-acetyl-alpha-D-glucosamine 1-phosphate from alpha-D-glucosamine 6-phosphate (route II): step 2/2. Its pathway is nucleotide-sugar biosynthesis; UDP-N-acetyl-alpha-D-glucosamine biosynthesis; UDP-N-acetyl-alpha-D-glucosamine from N-acetyl-alpha-D-glucosamine 1-phosphate: step 1/1. The protein operates within bacterial outer membrane biogenesis; LPS lipid A biosynthesis. Its function is as follows. Catalyzes the last two sequential reactions in the de novo biosynthetic pathway for UDP-N-acetylglucosamine (UDP-GlcNAc). The C-terminal domain catalyzes the transfer of acetyl group from acetyl coenzyme A to glucosamine-1-phosphate (GlcN-1-P) to produce N-acetylglucosamine-1-phosphate (GlcNAc-1-P), which is converted into UDP-GlcNAc by the transfer of uridine 5-monophosphate (from uridine 5-triphosphate), a reaction catalyzed by the N-terminal domain. The chain is Bifunctional protein GlmU from Shouchella clausii (strain KSM-K16) (Alkalihalobacillus clausii).